A 360-amino-acid polypeptide reads, in one-letter code: Holliday junction branch migration complex subunit RuvB (360 aa).

A disordered region spans residues 1–23 (MIASVGDSRYYPKSVANGEKSDQ). The large ATPase domain (RuvB-L) stretch occupies residues 12–204 (PKSVANGEKS…FGIVLRLEFY (193 aa)). ATP-binding positions include L43, R44, G85, K88, T89, T90, 151 to 153 (EDY), R194, Y204, and R241. T89 lines the Mg(2+) pocket. The interval 205-275 (TTEDLKIILK…TAQKALEMLE (71 aa)) is small ATPAse domain (RuvB-S). The tract at residues 278–360 (QHGFDEVDRR…KPPKKQDSLF (83 aa)) is head domain (RuvB-H). The DNA site is built by R333 and R338.

Belongs to the RuvB family. As to quaternary structure, homohexamer. Forms an RuvA(8)-RuvB(12)-Holliday junction (HJ) complex. HJ DNA is sandwiched between 2 RuvA tetramers; dsDNA enters through RuvA and exits via RuvB. An RuvB hexamer assembles on each DNA strand where it exits the tetramer. Each RuvB hexamer is contacted by two RuvA subunits (via domain III) on 2 adjacent RuvB subunits; this complex drives branch migration. In the full resolvosome a probable DNA-RuvA(4)-RuvB(12)-RuvC(2) complex forms which resolves the HJ.

The protein resides in the cytoplasm. The enzyme catalyses ATP + H2O = ADP + phosphate + H(+). The RuvA-RuvB-RuvC complex processes Holliday junction (HJ) DNA during genetic recombination and DNA repair, while the RuvA-RuvB complex plays an important role in the rescue of blocked DNA replication forks via replication fork reversal (RFR). RuvA specifically binds to HJ cruciform DNA, conferring on it an open structure. The RuvB hexamer acts as an ATP-dependent pump, pulling dsDNA into and through the RuvAB complex. RuvB forms 2 homohexamers on either side of HJ DNA bound by 1 or 2 RuvA tetramers; 4 subunits per hexamer contact DNA at a time. Coordinated motions by a converter formed by DNA-disengaged RuvB subunits stimulates ATP hydrolysis and nucleotide exchange. Immobilization of the converter enables RuvB to convert the ATP-contained energy into a lever motion, pulling 2 nucleotides of DNA out of the RuvA tetramer per ATP hydrolyzed, thus driving DNA branch migration. The RuvB motors rotate together with the DNA substrate, which together with the progressing nucleotide cycle form the mechanistic basis for DNA recombination by continuous HJ branch migration. Branch migration allows RuvC to scan DNA until it finds its consensus sequence, where it cleaves and resolves cruciform DNA. This chain is Holliday junction branch migration complex subunit RuvB, found in Koribacter versatilis (strain Ellin345).